We begin with the raw amino-acid sequence, 228 residues long: MSYVFINDSSQTSVPLLQACIDGDLSFARRLLETGCDPNIRDHRGRTGLHLAAARGNVDICRFLHKFGADLLATDYQGNTALHLCGHVDTIQFLVSNGLKIDICNHNGSTPLVLAKRRGVNKDAIRLLEGLEEQEVKGFNRGAHSKLEAMQMAESESAMESHSLLNPNLQNSEGVLSSFRSTWQEFVEDLGFWRVLLLLVVIALLSLGIAYYVSGVLPFSASQLELVH.

4 ANK repeats span residues Gln-11 to Ile-40, Arg-44 to Ala-73, Gln-77 to Ile-103, and Asn-107 to Gly-138. The chain crosses the membrane as a helical span at residues Val-195–Gly-215.

Its subcellular location is the membrane. The polypeptide is Ankyrin repeat domain-containing protein 46 (ankrd46) (Danio rerio (Zebrafish)).